Reading from the N-terminus, the 805-residue chain is Ubiquitin carboxyl-terminal hydrolase 10-B (805 aa).

Disordered stretches follow at residues 136 to 173 (AIPD…YLEG) and 284 to 305 (DTTE…EDTV). Polar residues-rich tracts occupy residues 143–153 (NADSDGTSGTG) and 284–298 (DTTE…QTLE). One can recognise a USP domain in the interval 422-802 (RGLINKGNWC…TAYLLYYRRV (381 aa)). C431 serves as the catalytic Nucleophile. Residues 573–600 (EEVNKEEQEGSDEEWEQVGPRNKSSVTR) form a disordered region. Catalysis depends on H756, which acts as the Proton acceptor.

It belongs to the peptidase C19 family. USP10 subfamily.

It is found in the cytoplasm. The protein localises to the nucleus. It carries out the reaction Thiol-dependent hydrolysis of ester, thioester, amide, peptide and isopeptide bonds formed by the C-terminal Gly of ubiquitin (a 76-residue protein attached to proteins as an intracellular targeting signal).. Functionally, hydrolase that can remove conjugated ubiquitin from target proteins such as p53/tp53, rps2/us5, rps3/us3, rps10/eS10, becn1, snx3 and cftr. Acts as an essential regulator of p53/tp53 stability: in unstressed cells, specifically deubiquitinates p53/tp53 in the cytoplasm, leading to counteracts MDM2 action and stabilize p53/tp53. Following DNA damage, translocates to the nucleus and deubiquitinates p53/tp53, leading to regulate the p53/TP53-dependent DNA damage response. Component of a regulatory loop that controls autophagy and p53/tp53 levels. Plays a key role in 40S ribosome subunit recycling when a ribosome has stalled during translation: acts both by inhibiting formation of stress granules, which store stalled translation pre-initiation complexes, and mediating deubiquitination of 40S ribosome subunits. Deubiquitinates cftr in early endosomes, enhancing its endocytic recycling. The polypeptide is Ubiquitin carboxyl-terminal hydrolase 10-B (usp10-b) (Xenopus laevis (African clawed frog)).